The following is a 156-amino-acid chain: Small ribosomal subunit protein uS7 (156 aa).

It belongs to the universal ribosomal protein uS7 family. In terms of assembly, part of the 30S ribosomal subunit. Contacts proteins S9 and S11.

One of the primary rRNA binding proteins, it binds directly to 16S rRNA where it nucleates assembly of the head domain of the 30S subunit. Is located at the subunit interface close to the decoding center, probably blocks exit of the E-site tRNA. In Latilactobacillus sakei subsp. sakei (strain 23K) (Lactobacillus sakei subsp. sakei), this protein is Small ribosomal subunit protein uS7.